We begin with the raw amino-acid sequence, 670 residues long: DNA ligase (670 aa).

NAD(+) contacts are provided by residues 36–40, 84–85, and Glu116; these read DEEYD and SL. Lys118 acts as the N6-AMP-lysine intermediate in catalysis. Positions 139, 177, 293, and 317 each coordinate NAD(+). Positions 411, 414, 429, and 434 each coordinate Zn(2+). Residues 594–670 form the BRCT domain; sequence KKPSPLKGLT…SYEEFLKMLE (77 aa).

It belongs to the NAD-dependent DNA ligase family. LigA subfamily. Mg(2+) serves as cofactor. Mn(2+) is required as a cofactor.

The enzyme catalyses NAD(+) + (deoxyribonucleotide)n-3'-hydroxyl + 5'-phospho-(deoxyribonucleotide)m = (deoxyribonucleotide)n+m + AMP + beta-nicotinamide D-nucleotide.. DNA ligase that catalyzes the formation of phosphodiester linkages between 5'-phosphoryl and 3'-hydroxyl groups in double-stranded DNA using NAD as a coenzyme and as the energy source for the reaction. It is essential for DNA replication and repair of damaged DNA. This chain is DNA ligase, found in Thermodesulfovibrio yellowstonii (strain ATCC 51303 / DSM 11347 / YP87).